The sequence spans 107 residues: Putative double-stranded DNA mimic protein PC1_1990 (107 aa).

This sequence belongs to the putative dsDNA mimic protein family.

Functionally, may act as a double-stranded DNA (dsDNA) mimic. Probably regulates the activity of a dsDNA-binding protein. This is Putative double-stranded DNA mimic protein PC1_1990 from Pectobacterium carotovorum subsp. carotovorum (strain PC1).